A 232-amino-acid chain; its full sequence is UPF0173 metal-dependent hydrolase Msil_0741 (232 aa).

This sequence belongs to the UPF0173 family.

The polypeptide is UPF0173 metal-dependent hydrolase Msil_0741 (Methylocella silvestris (strain DSM 15510 / CIP 108128 / LMG 27833 / NCIMB 13906 / BL2)).